A 556-amino-acid polypeptide reads, in one-letter code: Formate--tetrahydrofolate ligase (556 aa).

An ATP-binding site is contributed by 65–72 (TPAGEGKS).

The protein belongs to the formate--tetrahydrofolate ligase family.

It catalyses the reaction (6S)-5,6,7,8-tetrahydrofolate + formate + ATP = (6R)-10-formyltetrahydrofolate + ADP + phosphate. It participates in one-carbon metabolism; tetrahydrofolate interconversion. The polypeptide is Formate--tetrahydrofolate ligase (Natranaerobius thermophilus (strain ATCC BAA-1301 / DSM 18059 / JW/NM-WN-LF)).